A 200-amino-acid chain; its full sequence is Phospholipase A2 inhibitor gamma subunit A (200 aa).

An N-terminal signal peptide occupies residues 1 to 19; sequence MKSLHTICLLFIFIARGNS. 8 disulfide bridges follow: C22–C46, C25–C32, C39–C67, C73–C94, C95–C100, C118–C143, C136–C165, and C169–C191. N-linked (GlcNAc...) asparagine glycosylation occurs at N176.

It belongs to the CNF-like-inhibitor family. Occurs as a mixture of oligomers. Tetrameric arrangement appears to be the predominant quaternary structure. Expressed by the liver.

It localises to the secreted. Inhibits the enzymatic activity of phospholipase A2 (PA2). The chain is Phospholipase A2 inhibitor gamma subunit A from Gloydius brevicaudus siniticus (Chinese mamushi).